Here is a 390-residue protein sequence, read N- to C-terminus: 3-ketoacyl-CoA thiolase (390 aa).

The Acyl-thioester intermediate role is filled by Cys95. Residues His346 and Cys376 each act as proton acceptor in the active site.

Belongs to the thiolase-like superfamily. Thiolase family. Heterotetramer of two alpha chains (FadB) and two beta chains (FadA).

The protein resides in the cytoplasm. The enzyme catalyses an acyl-CoA + acetyl-CoA = a 3-oxoacyl-CoA + CoA. It functions in the pathway lipid metabolism; fatty acid beta-oxidation. Catalyzes the final step of fatty acid oxidation in which acetyl-CoA is released and the CoA ester of a fatty acid two carbons shorter is formed. In Psychrobacter sp. (strain PRwf-1), this protein is 3-ketoacyl-CoA thiolase.